Here is a 498-residue protein sequence, read N- to C-terminus: Diacylglycerol O-acyltransferase 1 (498 aa).

A disordered region spans residues 1–66; it reads MGDRGGAGSS…AHTRDKDRQT (66 aa). Topologically, residues 1 to 92 are cytoplasmic; sequence MGDRGGAGSS…SLFSSDSGFS (92 aa). The tract at residues 1–96 is involved in homomerization; sequence MGDRGGAGSS…SDSGFSNYRG (96 aa). A Phosphoserine modification is found at S20. The segment covering 58-68 has biased composition (basic and acidic residues); it reads HTRDKDRQTSV. Residues 93 to 127 traverse the membrane as a helical segment; sequence NYRGILNWCVVMLILSNARLSLENLIKYGILVDPI. The Lumenal segment spans residues 128 to 139; sequence QVVSLFLKDPYS. The interval 128-139 is extracellular loop 1 (EL1); sequence QVVSLFLKDPYS. Residues 140–165 form a helical membrane-spanning segment; it reads WPAPCLIIASNIFIVATFQIEKRLSV. An MBOAT fold region spans residues 140–498; sequence WPAPCLIIAS…VLNYDAPVGA (359 aa). The Cytoplasmic portion of the chain corresponds to 166 to 170; the sequence is GALTE. Residues 171–193 traverse the membrane as a helical segment; that stretch reads QMGLLLHVVNLATIICFPAAVAL. Topologically, residues 194 to 200 are lumenal; that stretch reads LVESITP. Residues 201–232 traverse the membrane as a helical segment; that stretch reads VGSLFALASYSIIFLKLSSYRDVNLWCRQRRV. At 233 to 284 the chain is on the cytoplasmic side; it reads KAKAVSAGKKVSGAAAQNTVSYPDNLTYRDLYYFIFAPTLCYELNFPRSPRI. The tract at residues 235-287 is intracellular loop 1 (IL1); sequence KAVSAGKKVSGAAAQNTVSYPDNLTYRDLYYFIFAPTLCYELNFPRSPRIRKR. The chain crosses the membrane as a helical span at residues 285–319; that stretch reads RKRFLLRRVLEMLFFTQLQVGLIQQWMVPTIQNSM. Residues 320–326 are Lumenal-facing; it reads KPFKDMD. The helical transmembrane segment at 327–364 threads the bilayer; that stretch reads YSRIIERLLKLAVPNHLIWLIFFYWLFHSCLNAVAELL. The Cytoplasmic portion of the chain corresponds to 365 to 410; the sequence is QFGDREFYRDWWNAESVTYFWQNWNIPVHKWCIRHFYKPMLRLGSN. An intracellular loop 2 (IL2) region spans residues 365 to 410; it reads QFGDREFYRDWWNAESVTYFWQNWNIPVHKWCIRHFYKPMLRLGSN. The FYXDWWN motif signature appears at 371 to 377; that stretch reads FYRDWWN. An acyl-CoA contacts are provided by residues 385 to 393, Y401, and R415; that span reads WQNWNIPVH. The interval 391–405 is amphipathic helix (AH); the sequence is PVHKWCIRHFYKPML. The chain crosses the membrane as a helical span at residues 411 to 431; that stretch reads KWMARTGVFWASAFFHEYLVS. H426 is an active-site residue. Over 432-439 the chain is Lumenal; sequence IPLRMFRL. A helical membrane pass occupies residues 440–458; it reads WAFTAMMAQVPLAWIVNRF. Residues 459 to 460 are Cytoplasmic-facing; sequence FQ. The helical transmembrane segment at 461-492 threads the bilayer; the sequence is GNYGNAAVWVTLIIGQPVAVLMYVHDYYVLNY. Y488 contributes to the an acyl-CoA binding site. At 493-498 the chain is on the lumenal side; the sequence is DAPVGA.

Belongs to the membrane-bound acyltransferase family. Sterol o-acyltransferase subfamily. Homodimer or homotetramer; both forms have similar enzymatic activities.

The protein resides in the endoplasmic reticulum membrane. It catalyses the reaction an acyl-CoA + a 1,2-diacyl-sn-glycerol = a triacyl-sn-glycerol + CoA. The enzyme catalyses all-trans-retinol + an acyl-CoA = an all-trans-retinyl ester + CoA. The catalysed reaction is 2-(9Z-octadecenoyl)-glycerol + (9Z)-octadecenoyl-CoA = 1,2-di-(9Z-octadecenoyl)-sn-glycerol + CoA. It carries out the reaction 1,2-di-(9Z-octadecenoyl)-sn-glycerol + (9Z)-octadecenoyl-CoA = 1,2,3-tri-(9Z-octadecenoyl)-glycerol + CoA. It catalyses the reaction all-trans-retinol + hexadecanoyl-CoA = all-trans-retinyl hexadecanoate + CoA. The enzyme catalyses 1-O-(9Z-octadecenyl)-glycerol + (9Z)-octadecenoyl-CoA = 1-O-(9Z-octadecyl)-3-(9Z-octadecenoyl)-glycerol + CoA. The catalysed reaction is 1-O-(9Z-octadecyl)-3-(9Z-octadecenoyl)-glycerol + (9Z)-octadecenoyl-CoA = 1-O-(9Z-octadecenyl)-2,3-di-(9Z-octadecenoyl)glycerol + CoA. It carries out the reaction 1-(9Z-octadecenoyl)-glycerol + (9Z)-octadecenoyl-CoA = 1,2-di-(9Z-octadecenoyl)-glycerol + CoA. It catalyses the reaction 1,2-di-(9Z-octadecenoyl)-glycerol + (9Z)-octadecenoate + H(+) = 1,2,3-tri-(9Z-octadecenoyl)-glycerol + H2O. The enzyme catalyses 1-octadecanoyl-2-(5Z,8Z,11Z,14Z-eicosatetraenoyl)-sn-glycerol + (9Z)-octadecenoyl-CoA = 1-octadecanoyl-2-(5Z,8Z,11Z,14Z)-eicosatetraenoyl-3-(9Z)-octadecenoyl-sn-glycerol + CoA. The catalysed reaction is hexadecane-1,2-diol + 2 hexadecanoyl-CoA = 1,2-O,O-dihexadecanoyl-1,2-hexadecanediol + 2 CoA. It carries out the reaction hexadecane-1,2-diol + hexadecanoyl-CoA = 2-hydroxyhexadecyl hexadecanoate + CoA. It catalyses the reaction 2-(9Z-octadecenoyl)-glycerol + hexadecanoyl-CoA = 1-hexadecanoyl-2-(9Z-octadecenoyl)-sn-glycerol + CoA. The enzyme catalyses 1,2-di-(9Z-octadecenoyl)-sn-glycerol + hexadecanoyl-CoA = 1,2-di-(9Z)-octadecenoyl-3-hexadecanoyl-sn-glycerol + CoA. The catalysed reaction is hexadecan-1-ol + hexadecanoyl-CoA = hexadecanyl hexadecanoate + CoA. It carries out the reaction 13-cis-retinol + hexadecanoyl-CoA = 13-cis-retinyl hexadecanoate + CoA. It catalyses the reaction 1,3-di-(9Z-octadecenoyl)-glycerol + (9Z)-octadecenoyl-CoA = 1,2,3-tri-(9Z-octadecenoyl)-glycerol + CoA. The enzyme catalyses 2,3-di-(9Z)-octadecenoyl-sn-glycerol + (9Z)-octadecenoyl-CoA = 1,2,3-tri-(9Z-octadecenoyl)-glycerol + CoA. It functions in the pathway lipid metabolism; glycerolipid metabolism. Catalyzes the terminal and only committed step in triacylglycerol synthesis by using diacylglycerol and fatty acyl CoA as substrates. Highly expressed in epithelial cells of the small intestine and its activity is essential for the absorption of dietary fats. In liver, plays a role in esterifying exogenous fatty acids to glycerol, and is required to synthesize fat for storage. Also present in female mammary glands, where it produces fat in the milk. May be involved in VLDL (very low density lipoprotein) assembly. In contrast to DGAT2 it is not essential for survival. Functions as the major acyl-CoA retinol acyltransferase (ARAT) in the skin, where it acts to maintain retinoid homeostasis and prevent retinoid toxicity leading to skin and hair disorders. Exhibits additional acyltransferase activities, includin acyl CoA:monoacylglycerol acyltransferase (MGAT), wax monoester and wax diester synthases. Also able to use 1-monoalkylglycerol (1-MAkG) as an acyl acceptor for the synthesis of monoalkyl-monoacylglycerol (MAMAG). The polypeptide is Diacylglycerol O-acyltransferase 1 (Rattus norvegicus (Rat)).